A 348-amino-acid chain; its full sequence is Probable dual-specificity RNA methyltransferase RlmN (348 aa).

Glutamate 93 acts as the Proton acceptor in catalysis. Residues 99-333 (TEKRLTACLS…VSFRKSRGLD (235 aa)) form the Radical SAM core domain. Cysteine 106 and cysteine 338 are disulfide-bonded. [4Fe-4S] cluster-binding residues include cysteine 113, cysteine 117, and cysteine 120. Residues 160–161 (GE), serine 190, 219–221 (SLH), and asparagine 295 contribute to the S-adenosyl-L-methionine site. Cysteine 338 (S-methylcysteine intermediate) is an active-site residue.

It belongs to the radical SAM superfamily. RlmN family. It depends on [4Fe-4S] cluster as a cofactor.

The protein localises to the cytoplasm. The catalysed reaction is adenosine(2503) in 23S rRNA + 2 reduced [2Fe-2S]-[ferredoxin] + 2 S-adenosyl-L-methionine = 2-methyladenosine(2503) in 23S rRNA + 5'-deoxyadenosine + L-methionine + 2 oxidized [2Fe-2S]-[ferredoxin] + S-adenosyl-L-homocysteine. It catalyses the reaction adenosine(37) in tRNA + 2 reduced [2Fe-2S]-[ferredoxin] + 2 S-adenosyl-L-methionine = 2-methyladenosine(37) in tRNA + 5'-deoxyadenosine + L-methionine + 2 oxidized [2Fe-2S]-[ferredoxin] + S-adenosyl-L-homocysteine. In terms of biological role, specifically methylates position 2 of adenine 2503 in 23S rRNA and position 2 of adenine 37 in tRNAs. The protein is Probable dual-specificity RNA methyltransferase RlmN of Prochlorococcus marinus (strain MIT 9312).